The following is a 468-amino-acid chain: mRNA cleavage and polyadenylation factor CLP1 (468 aa).

Positions 1–22 (MLSLPGLNLAPQPAEPLNAPTS) are disordered. ATP-binding positions include E35, K74, and 138-143 (HSGKTS).

Belongs to the Clp1 family. Clp1 subfamily. As to quaternary structure, component of a pre-mRNA cleavage factor complex. Interacts directly with PCF11.

Its subcellular location is the nucleus. Its function is as follows. Required for endonucleolytic cleavage during polyadenylation-dependent pre-mRNA 3'-end formation. This is mRNA cleavage and polyadenylation factor CLP1 from Phaeosphaeria nodorum (strain SN15 / ATCC MYA-4574 / FGSC 10173) (Glume blotch fungus).